Here is a 1338-residue protein sequence, read N- to C-terminus: P-type sodium-transporting ATPase4 (1338 aa).

The interval 1 to 106 (MAARASADKL…KSISSVSQMH (106 aa)) is disordered. Residues 55-69 (AEEKVAGHDGESPRR) are compositionally biased toward basic and acidic residues. Over residues 91–104 (GHSQLGKSISSVSQ) the composition is skewed to polar residues. A run of 8 helical transmembrane segments spans residues 229–249 (IFIQQFLSPVVLLLLVAAIAS), 255–275 (WVEGAAIFIIVTLNASLATYM), 418–438 (LGGMIGLIAICVLIIVVVVAI), 456–476 (IVLVAVGFAVSSIPEGLPMVV), 985–1005 (FVCFLLGTNIGEIIYLTIAIA), 1068–1088 (IFEAGCVLMSLALGLYLCTGV), 1261–1281 (MHLACSISATLTSLLTIVPGI), and 1288–1308 (CALPWYLYLFAIGCGFVNLIL).

Belongs to the cation transport ATPase (P-type) (TC 3.A.3) family.

It is found in the cell membrane. The catalysed reaction is Na(+)(in) + ATP + H2O = Na(+)(out) + ADP + phosphate + H(+). Its activity is regulated as follows. Inhibited by cipargamin, a synthetic spiroindolone. Inhibited by pyrazoleamide PA21A050, structurally unrelated to the spiroindolones. Inhibited by (+)-SJ733, a dihydroisoquinolone compound. Its function is as follows. Sodium-exporting ATPase. Required for the extrusion of Na(+) from the parasites to maintain a low cytosolic concentration of Na(+). Required for maintaining the viability of extracellular parasites but not for intracellular growth, egress or invasion. Involved in parasite virulence. In Toxoplasma gondii (strain ATCC 50861 / VEG), this protein is P-type sodium-transporting ATPase4.